The primary structure comprises 189 residues: UPF0398 protein LGAS_1023 (189 aa).

This sequence belongs to the UPF0398 family.

The sequence is that of UPF0398 protein LGAS_1023 from Lactobacillus gasseri (strain ATCC 33323 / DSM 20243 / BCRC 14619 / CIP 102991 / JCM 1131 / KCTC 3163 / NCIMB 11718 / NCTC 13722 / AM63).